A 485-amino-acid polypeptide reads, in one-letter code: Membrane-bound lytic murein transglycosylase F (485 aa).

The signal sequence occupies residues 1–29; the sequence is MFAHTALRQRCAKWLLATGLFLLLGACVE. Residues 30 to 267 are non-LT domain; that stretch reads KPSTLERVKE…RLKDRYYGHV (238 aa). The segment at 268–485 is LT domain; sequence DVLGYVGAYT…DKPADKSSPM (218 aa). Glutamate 314 is a catalytic residue. The tract at residues 465-485 is disordered; it reads EGNLHVPGVNKDKPADKSSPM. Positions 474-485 are enriched in basic and acidic residues; it reads NKDKPADKSSPM.

In the N-terminal section; belongs to the bacterial solute-binding protein 3 family. This sequence in the C-terminal section; belongs to the transglycosylase Slt family.

Its subcellular location is the cell outer membrane. It carries out the reaction Exolytic cleavage of the (1-&gt;4)-beta-glycosidic linkage between N-acetylmuramic acid (MurNAc) and N-acetylglucosamine (GlcNAc) residues in peptidoglycan, from either the reducing or the non-reducing ends of the peptidoglycan chains, with concomitant formation of a 1,6-anhydrobond in the MurNAc residue.. Functionally, murein-degrading enzyme that degrades murein glycan strands and insoluble, high-molecular weight murein sacculi, with the concomitant formation of a 1,6-anhydromuramoyl product. Lytic transglycosylases (LTs) play an integral role in the metabolism of the peptidoglycan (PG) sacculus. Their lytic action creates space within the PG sacculus to allow for its expansion as well as for the insertion of various structures such as secretion systems and flagella. The polypeptide is Membrane-bound lytic murein transglycosylase F (Pseudomonas putida (strain ATCC 700007 / DSM 6899 / JCM 31910 / BCRC 17059 / LMG 24140 / F1)).